The chain runs to 127 residues: Group 3 truncated hemoglobin ctb (127 aa).

Residues tyrosine 64 and histidine 72 each coordinate heme.

Belongs to the truncated hemoglobin family. Group III subfamily. As to quaternary structure, monomer. It depends on heme as a cofactor.

It is found in the cytoplasm. Has been suggested to be involved in cytochrome c peroxidase or P450-like oxygen chemistry or cyanide detoxification. The high oxygen affinity of this protein suggests that it probably does not function as an oxygen transporter. The chain is Group 3 truncated hemoglobin ctb (ctb) from Campylobacter jejuni subsp. jejuni serotype O:2 (strain ATCC 700819 / NCTC 11168).